We begin with the raw amino-acid sequence, 935 residues long: Coiled-coil domain-containing protein 191 (935 aa).

Coiled-coil stretches lie at residues Arg189–Gln324, Tyr366–Lys438, Arg554–Gln589, and Lys660–Ile740. 2 disordered regions span residues Ser596–Ala661 and Glu678–Glu715.

This Macaca fascicularis (Crab-eating macaque) protein is Coiled-coil domain-containing protein 191 (CCDC191).